Reading from the N-terminus, the 206-residue chain is SOSS complex subunit B2 (206 aa).

Residues 26-89 constitute a DNA-binding region (OB); the sequence is IVLEIGRVTK…SMWKGCLTLY (64 aa). 2 disordered regions span residues 114-146 and 166-206; these read EPNPDYRGQQNKGAHNEQKNNSMNNSNNVGTGT and SYAG…AFKR. Residues 181 to 196 show a composition bias toward polar residues; the sequence is LPGTANNQTVMTTISN.

It belongs to the SOSS-B family. SOSS-B2 subfamily. Component of the SOSS complex, composed of SOSS-B (SOSS-B1/NABP2 or SOSS-B2/NABP1), SOSS-A/INTS3 and SOSS-C/INIP. SOSS complexes containing SOSS-B1/NABP2 are more abundant than complexes containing SOSS-B2/NABP1.

The protein resides in the nucleus. Functionally, component of the SOSS complex, a multiprotein complex that functions downstream of the MRN complex to promote DNA repair and G2/M checkpoint. In the SOSS complex, acts as a sensor of single-stranded DNA that binds to single-stranded DNA, in particular to polypyrimidines. The SOSS complex associates with DNA lesions and influences diverse endpoints in the cellular DNA damage response including cell-cycle checkpoint activation, recombinational repair and maintenance of genomic stability. Required for efficient homologous recombination-dependent repair of double-strand breaks (DSBs) and ATM-dependent signaling pathways. The polypeptide is SOSS complex subunit B2 (NABP1) (Bos taurus (Bovine)).